The chain runs to 182 residues: MHEETSNSTLQGKTSFSIADILDPAKFNGTRETREISNNRESPKTTSPTQDPSAPNIANASAAKVKSKRIRTAFTLDQLRILERSFQSSHYLSVFERHCIASALGLSETQVKIWFQNRRTKWKKELDGHGGEEQSHCAPTALTQNPIMYALPGHHANHHVHYYPQQTHYLNTSFHPQTLMMY.

The important for interaction with tle3a stretch occupies residues 1–34; that stretch reads MHEETSNSTLQGKTSFSIADILDPAKFNGTRETR. Residues 24 to 63 are disordered; sequence PAKFNGTRETREISNNRESPKTTSPTQDPSAPNIANASAA. Residues 29-43 are compositionally biased toward basic and acidic residues; it reads GTRETREISNNRESP. The span at 52–63 shows a compositional bias: low complexity; sequence PSAPNIANASAA. A DNA-binding region (homeobox) is located at residues 67–126; the sequence is SKRIRTAFTLDQLRILERSFQSSHYLSVFERHCIASALGLSETQVKIWFQNRRTKWKKEL.

Belongs to the NK-1 homeobox family. Interacts with tle3a.

It localises to the nucleus. Transcriptional repressor. Activity as a repressor is enhanced by binding to the corepressor tle3a. The sequence is that of Homeobox protein pnx from Danio rerio (Zebrafish).